A 75-amino-acid chain; its full sequence is Dermaseptin-related peptide (75 aa).

The N-terminal stretch at 1–22 is a signal peptide; the sequence is MAFLNKSLLLVLFLGLVSLSIC. The propeptide occupies 23–43; it reads EEERRENEDEEEQEDDEQSEM. The interval 24 to 44 is disordered; that stretch reads EERRENEDEEEQEDDEQSEMR. A compositionally biased stretch (acidic residues) spans 30-40; it reads EDEEEQEDDEQ. Residue Gln72 is modified to Glutamine amide. Positions 74 to 75 are excised as a propeptide; sequence EQ.

Expressed by the skin glands.

The protein localises to the secreted. Its function is as follows. Has antibacterial activity against Gram-positive bacterium M.luteus NCT C2665 but not against Gram-negative bacterium E.coli K12D31. The sequence is that of Dermaseptin-related peptide from Agalychnis callidryas (Red-eyed tree frog).